Here is an 841-residue protein sequence, read N- to C-terminus: MKPGGFWPHLALLGVSLPAVLGWMDQGASRSPNMVPGESQAEETRGFEVTRREGLPSPGLSASCGKKLCSHGSRCLLNRTTGQPSCQCLEVCRPRYMPVCGSDGRLYGNHCELRRAACLLGKRIVSVHSKDCFLKGDMCTMAGYARLKNVLLALQSRRQPLPQGTPRQSLASQKRLLVESLFKDLDADGNGHLGSLELAQYVLKEQDMDGSLNRCSPSDLLRFDDYNSDGSLTLGEFYTAFQVIQLSLAPEDKVSVTTVTVGLSTVLTCAIRGDLRPPIIWKRNGLTLSFLGLEDINDFGEDGSLYITKVTTVHMGNYTCHALGHEQLVQTHVLQVNVPPVIRVYPETQAQEPGVAASLRCHAEGIPLPRIIWLKNGMDVSTQMSKQLSLLANGSELHIGSVRYEDTGAYTCIAKNEVGVDEDISSLFIEDSARKTLANILWREEGLSVGNMFYVFAEDGIVVIHPVDCEVQRRLKPTEKIFMSYEEICPRVEGDATQPCQWASAVNVRNRYIYVAQPALNRVLVVDVQAQKVLQSIGVDPLPVKLSYDKSHDQVWVLSWGDMHKSQPSLQVITEASTGQGQHLIRTPFAGVDNFFIPPTNLIINHIRFGFIFNKTDPAVHKVDLETLMALKTISLRHYGCMPQAMAHTHLGGYFFVQCQQDTPTSTGPQLLIDSVTDSVLGPNSDITGTPHVSPDGRFIVSVSNKGPWLHVQEVTVRGEIQTLYDLKINPGISDLAFQHSFTEGSQYNAYATLDKEPDLLFLELSTGKMGRLKNLKEPPRGPAPTWGGPRRVLRDSGLFGQYLLTPAQESLFLVNGRQNALRCEVSGIKGAATVVWVGEV.

The signal sequence occupies residues 1-22 (MKPGGFWPHLALLGVSLPAVLG). Residues 29–54 (SRSPNMVPGESQAEETRGFEVTRREG) are disordered. Positions 42–54 (EETRGFEVTRREG) are enriched in basic and acidic residues. The region spanning 80 to 134 (TTGQPSCQCLEVCRPRYMPVCGSDGRLYGNHCELRRAACLLGKRIVSVHSKDCFL) is the Kazal-like domain. Cystine bridges form between cysteine 86/cysteine 118, cysteine 92/cysteine 111, and cysteine 100/cysteine 132. 2 consecutive EF-hand domains span residues 173-208 (QKRLLVESLFKDLDADGNGHLGSLELAQYVLKEQDM) and 225-247 (DYNSDGSLTLGEFYTAFQVIQLS). Positions 186, 188, 190, 192, 197, 225, 227, 229, 231, and 236 each coordinate Ca(2+). Ig-like domains follow at residues 250–336 (PEDK…VLQV) and 340–425 (PVIR…EDIS). 2 disulfides stabilise this stretch: cysteine 269-cysteine 320 and cysteine 361-cysteine 412. N-linked (GlcNAc...) asparagine glycosylation is present at asparagine 317.

The protein localises to the secreted. In Mus musculus (Mouse), this protein is Follistatin-related protein 4 (Fstl4).